Reading from the N-terminus, the 447-residue chain is Chorismate synthase, chloroplastic (447 aa).

A disordered region spans residues 1–24 (MASSLSTKPFLSGSRRRSTTDGSG). The N-terminal 57 residues, 1-57 (MASSLSTKPFLSGSRRRSTTDGSGWSYFQTSDLRQLSNQSVQISVRRQTAPLKLVVQ), are a transit peptide targeting the chloroplast.

Belongs to the chorismate synthase family. As to quaternary structure, homotetramer. It depends on FMNH2 as a cofactor. Post-translationally, the N-terminus is blocked.

The protein resides in the plastid. The protein localises to the chloroplast. The catalysed reaction is 5-O-(1-carboxyvinyl)-3-phosphoshikimate = chorismate + phosphate. The protein operates within metabolic intermediate biosynthesis; chorismate biosynthesis; chorismate from D-erythrose 4-phosphate and phosphoenolpyruvate: step 7/7. Its function is as follows. Catalyzes the last common step of the biosynthesis of aromatic amino acids, produced via the shikimic acid pathway. This is Chorismate synthase, chloroplastic from Capnoides sempervirens (Rock-harlequin).